The following is a 315-amino-acid chain: Putative S-adenosyl-L-methionine-dependent methyltransferase MAV_4557 (315 aa).

S-adenosyl-L-methionine is bound by residues Asp-134 and Asp-163–Leu-164.

It belongs to the UPF0677 family.

Functionally, exhibits S-adenosyl-L-methionine-dependent methyltransferase activity. In Mycobacterium avium (strain 104), this protein is Putative S-adenosyl-L-methionine-dependent methyltransferase MAV_4557.